The primary structure comprises 268 residues: MGNECFLTFTTTHLSEAEQKLALYRLQLVEPPKLPLEKKTNPDKDGPDIKPNLWMWVNPNMVYPPGKLEVAVKEEDQSALSAFQPALKEEEDSCSEASEVQQPLPPCRQKRKQRRSTVPLPLAPGRRAPLENPWRLPQAISPEGRLWSRPPLHYFHLIALALRNSPPCGLSVQQIYSFTREHFPFFRTAPEAWKNTVRHNLSFRDSFEKVPASRQGGASTGPRSCLWKLTEEGHRRFSKEARTLASTQLQSIQQCMSQPGVKPFLFDL.

The interval 91–126 is disordered; sequence EDSCSEASEVQQPLPPCRQKRKQRRSTVPLPLAPGR. Residues 149–248 constitute a DNA-binding region (fork-head); sequence RPPLHYFHLI…KEARTLASTQ (100 aa).

As to expression, expressed in adult germ cells (at protein level). Expressed in heart, liver, lung and embryonic brain.

The protein localises to the nucleus. The protein resides in the cytoplasm. Its subcellular location is the perinuclear region. In terms of biological role, transcription factor which acts as both an activator and a repressor. Activates transcription of a number of genes including the heat shock chaperones HSPA1A and HSPA6 and the antioxidant NADPH-dependent reductase DHRS2 which are involved in protection against oxidative stress. Required for normal brain development. This chain is Forkhead box protein R1 (Foxr1), found in Mus musculus (Mouse).